The primary structure comprises 193 residues: Acyl carrier protein phosphodiesterase (193 aa).

It belongs to the AcpH family.

The enzyme catalyses holo-[ACP] + H2O = apo-[ACP] + (R)-4'-phosphopantetheine + H(+). Functionally, converts holo-ACP to apo-ACP by hydrolytic cleavage of the phosphopantetheine prosthetic group from ACP. The polypeptide is Acyl carrier protein phosphodiesterase (Salmonella dublin (strain CT_02021853)).